We begin with the raw amino-acid sequence, 439 residues long: MQSYFNELEQVRYEGSQSTNPLAFHHYNPDEMILGKRMADHLRFAACYWHTFCWGGADMFGANAFDRPWQQPGDALALAKRKAEVAFEFFHKLNVPYYCFHDVDVSPEGASLQEYLNNFAVMTDVLAEKQAASGVKLLWGTANCFTHPRYGAGAATNPDPEVFSWAATQVFTAMNATRQLGGENYVLWGGREGYETLLNTDLRQEREQIGRFMQMVVEHKHKTGFQGTLLIEPKPQEPTKHQYDYDVATVYGFLKQFGLEKEIKVNIEANHATLAGHSFHHEIASAIALGIFGSVDANRGDPQLGWDTDQFPNSVEENTLVMFEILKAGGFTTGGLNFDAKVRRQSTDKYDLFYGHIGAMDTMALALKFAAKMIEDGQLDQIVAKRYAGWNSELGQQILQGKMSLEELSRYASQHNLNPQHQSGHQELLENKVNRYLFG.

Catalysis depends on residues H101 and D104. E232, E268, H271, D296, D307, D309, and D339 together coordinate Mg(2+).

It belongs to the xylose isomerase family. Homotetramer. Mg(2+) serves as cofactor.

It localises to the cytoplasm. It catalyses the reaction alpha-D-xylose = alpha-D-xylulofuranose. The sequence is that of Xylose isomerase from Yersinia pseudotuberculosis serotype O:1b (strain IP 31758).